The chain runs to 197 residues: ATP-dependent Clp protease proteolytic subunit (197 aa).

Residue Ser-98 is the Nucleophile of the active site. His-123 is a catalytic residue.

Belongs to the peptidase S14 family. In terms of assembly, fourteen ClpP subunits assemble into 2 heptameric rings which stack back to back to give a disk-like structure with a central cavity, resembling the structure of eukaryotic proteasomes. Forms large heterooligomeric complexes consisting of an ATPase component (ClpX, ClpC or ClpE) and a proteolytic component (ClpP).

It is found in the cytoplasm. It carries out the reaction Hydrolysis of proteins to small peptides in the presence of ATP and magnesium. alpha-casein is the usual test substrate. In the absence of ATP, only oligopeptides shorter than five residues are hydrolyzed (such as succinyl-Leu-Tyr-|-NHMec, and Leu-Tyr-Leu-|-Tyr-Trp, in which cleavage of the -Tyr-|-Leu- and -Tyr-|-Trp bonds also occurs).. With respect to regulation, low intrinsic peptidase activity is stimulated by ATP-binding subunits ClpC, ClpE and ClpX. Activity is disregulated by acyldepsipeptides (ADEP) antibiotics, which negate the need for ATP-binding subunits for activation and which makes it into an unregulated protease. Each ClpP subunit binds 1 ADEP molecule, which prevents binding of ClpX. ADEP binding causes conformational shifts that open the gated pore of the ring. Protease activity is inhibited by diisopropylfluoro-phosphate. Protease activity is inhibited by bortezomib, an oncology drug originally designed to work on the human proteasome. Cleaves peptides in various proteins in a process that requires ATP hydrolysis. Has a limited peptidase activity in the absence of ATP-binding subunits ClpC, ClpE or ClpX. Has a chymotrypsin-like activity. Plays a major role in the degradation of misfolded proteins. ClpXP is involved in the complete degradation of the site-2 clipped anti-sigma-W factor RsiW. This results in the release of SigW and the transcriptional activation of genes under the control of the sigma-W factor. Probably the major protease that degrades proteins tagged by trans-translation. This is ATP-dependent Clp protease proteolytic subunit from Bacillus subtilis (strain 168).